The following is a 380-amino-acid chain: KEGLAPYIAETALRNLYLGTGIKEEEIEKYLKQFIKDLPGYIEDYNEDVFHQSGTVDAGAQGGSGSQGTTPPATGSGAKPATSGAGSGSGTGAGTGVTGGQARTGSGTGTGSGATGGQSGSGSGTEQVNTGSAGTNATGGQRDRDVDAGSTGKISVPKLKAMSKKMRLPKAKAKDVLHLDFLLTYKPQQQDISNTRATKEEFDRWYDAYKKEYEIDDTQMTVVMSGLMVWCIENGCSPNINGNWTMMDKDEQRVFPLKPVIENASPTFRQIMHHFSDAAEAYIEYRNSTERYMPRYGLQRNISDYSLARYAFDFYEMTSRTPARAKEAHMQMKAAAVRGSNTRLFGLDGNVGETQENTERHTAGDVSRNMHSLLGVQQHH.

Disordered stretches follow at residues 54 to 154 and 349 to 380; these read GTVD…TGKI and GNVGETQENTERHTAGDVSRNMHSLLGVQQHH. Positions 67–84 are enriched in low complexity; it reads QGTTPPATGSGAKPATSG. Gly residues-rich tracts occupy residues 85–99 and 106–123; these read AGSGSGTGAGTGVTG and SGTGTGSGATGGQSGSGS. Over residues 129–140 the composition is skewed to low complexity; sequence NTGSAGTNATGG.

Belongs to the potyviridae genome polyprotein family. Post-translationally, genome polyprotein of potyviruses undergoes post-translational proteolytic processing by the main proteinase NIa-pro resulting in the production of at least ten individual proteins. The P1 proteinase and the HC-pro cleave only their respective C-termini autocatalytically. 6K1 is essential for proper proteolytic separation of P3 from CI.

Its subcellular location is the virion. It catalyses the reaction RNA(n) + a ribonucleoside 5'-triphosphate = RNA(n+1) + diphosphate. In terms of biological role, an RNA-dependent RNA polymerase that plays an essential role in the virus replication. Functionally, involved in aphid transmission, cell-to-cell and systemis movement, encapsidation of the viral RNA and in the regulation of viral RNA amplification. The polypeptide is Genome polyprotein (Sorghum halepense (Johnson grass)).